The chain runs to 272 residues: NH(3)-dependent NAD(+) synthetase (272 aa).

45–52 (GISGGQDS) lines the ATP pocket. Asp-51 is a Mg(2+) binding site. Residue Arg-138 coordinates deamido-NAD(+). Thr-158 provides a ligand contact to ATP. Mg(2+) is bound at residue Glu-163. Deamido-NAD(+)-binding residues include Lys-171 and Asp-178. Lys-187 and Thr-209 together coordinate ATP. 258–259 (HK) is a deamido-NAD(+) binding site.

It belongs to the NAD synthetase family. In terms of assembly, homodimer.

It carries out the reaction deamido-NAD(+) + NH4(+) + ATP = AMP + diphosphate + NAD(+) + H(+). It participates in cofactor biosynthesis; NAD(+) biosynthesis; NAD(+) from deamido-NAD(+) (ammonia route): step 1/1. In terms of biological role, catalyzes the ATP-dependent amidation of deamido-NAD to form NAD. Uses ammonia as a nitrogen source. This Bacillus cereus (strain G9842) protein is NH(3)-dependent NAD(+) synthetase.